Consider the following 1436-residue polypeptide: tRNA (guanosine(18)-2'-O)-methyltransferase (1436 aa).

Residues 1365–1367 (LEQ), G1389, and 1409–1418 (IQQFGVIRSM) each bind S-adenosyl-L-methionine.

Belongs to the class IV-like SAM-binding methyltransferase superfamily. RNA methyltransferase TrmH family.

Its subcellular location is the cytoplasm. It carries out the reaction guanosine(18) in tRNA + S-adenosyl-L-methionine = 2'-O-methylguanosine(18) in tRNA + S-adenosyl-L-homocysteine + H(+). Functionally, S-adenosyl-L-methionine-dependent 2'-O-ribose methyltransferase that catalyzes the formation of 2'-O-methylguanosine at position 18 (Gm18) in various tRNAs. This is tRNA (guanosine(18)-2'-O)-methyltransferase from Saccharomyces cerevisiae (strain ATCC 204508 / S288c) (Baker's yeast).